Reading from the N-terminus, the 304-residue chain is Putative HTH-type transcriptional regulatory protein Memar_2347 (304 aa).

Residues 132 to 189 (LREVRERFRMSLGDLASHLGVSRRTISKYESGMGTTLDVAIKLEEIFNAPLVETIELL) form the HTH cro/C1-type domain. Positions 143–162 (LGDLASHLGVSRRTISKYES) form a DNA-binding region, H-T-H motif.

The polypeptide is Putative HTH-type transcriptional regulatory protein Memar_2347 (Methanoculleus marisnigri (strain ATCC 35101 / DSM 1498 / JR1)).